An 88-amino-acid polypeptide reads, in one-letter code: MAHKKAGGSSRNGRDSEGRRLGVKKFGSEAVIPGNIIVRQRGTKWHPGANVGMGKDHTIFALVPGHVRFETRRGRAFVGVTPLAEAAE.

The disordered stretch occupies residues 1-24; it reads MAHKKAGGSSRNGRDSEGRRLGVK.

The protein belongs to the bacterial ribosomal protein bL27 family.

The protein is Large ribosomal subunit protein bL27 of Methylobacterium radiotolerans (strain ATCC 27329 / DSM 1819 / JCM 2831 / NBRC 15690 / NCIMB 10815 / 0-1).